The following is a 229-amino-acid chain: UPF0173 metal-dependent hydrolase RD1_1994 (229 aa).

This sequence belongs to the UPF0173 family.

The polypeptide is UPF0173 metal-dependent hydrolase RD1_1994 (Roseobacter denitrificans (strain ATCC 33942 / OCh 114) (Erythrobacter sp. (strain OCh 114))).